Consider the following 720-residue polypeptide: Polyribonucleotide nucleotidyltransferase (720 aa).

Mg(2+)-binding residues include Asp487 and Asp493. The KH domain occupies 554–613; it reads PRIETFKIPTDKIREVIGTGGKVIREIVEKTGAKINIEDDGTVKVASNDGEAMKAAIKWI. Positions 623-691 constitute an S1 motif domain; sequence GQIYEGTVVK…DRGKTRLSMK (69 aa). The disordered stretch occupies residues 691–720; that stretch reads KAVDQQTGEDLEAAGHKAEKADAPREAAGE. Over residues 703-720 the composition is skewed to basic and acidic residues; the sequence is AAGHKAEKADAPREAAGE.

This sequence belongs to the polyribonucleotide nucleotidyltransferase family. The cofactor is Mg(2+).

The protein resides in the cytoplasm. The catalysed reaction is RNA(n+1) + phosphate = RNA(n) + a ribonucleoside 5'-diphosphate. Involved in mRNA degradation. Catalyzes the phosphorolysis of single-stranded polyribonucleotides processively in the 3'- to 5'-direction. In Nitrobacter hamburgensis (strain DSM 10229 / NCIMB 13809 / X14), this protein is Polyribonucleotide nucleotidyltransferase.